The primary structure comprises 207 residues: Large ribosomal subunit protein uL4 (207 aa).

The segment at glutamate 56–glycine 76 is disordered. A compositionally biased stretch (basic residues) spans glycine 60 to glycine 71.

Belongs to the universal ribosomal protein uL4 family. Part of the 50S ribosomal subunit.

Its function is as follows. One of the primary rRNA binding proteins, this protein initially binds near the 5'-end of the 23S rRNA. It is important during the early stages of 50S assembly. It makes multiple contacts with different domains of the 23S rRNA in the assembled 50S subunit and ribosome. Functionally, forms part of the polypeptide exit tunnel. The sequence is that of Large ribosomal subunit protein uL4 from Desulfitobacterium hafniense (strain Y51).